Consider the following 819-residue polypeptide: Ribosome-releasing factor 2, mitochondrial (819 aa).

The transit peptide at 1–30 (MWKWNVRRWAGARVNISKNRLSVINVGSRY) directs the protein to the mitochondrion. In terms of domain architecture, tr-type G spans 39–327 (SKVRNIGIIA…AIVNYLPSPI (289 aa)). GTP-binding positions include 48–55 (AHIDAGKT), 113–117 (DTPGH), and 165–168 (NKMD).

It belongs to the TRAFAC class translation factor GTPase superfamily. Classic translation factor GTPase family. EF-G/EF-2 subfamily.

The protein localises to the mitochondrion. Its function is as follows. Mitochondrial GTPase that mediates the disassembly of ribosomes from messenger RNA at the termination of mitochondrial protein biosynthesis. Not involved in the GTP-dependent ribosomal translocation step during translation elongation. The chain is Ribosome-releasing factor 2, mitochondrial from Saccharomyces cerevisiae (strain RM11-1a) (Baker's yeast).